The following is a 245-amino-acid chain: Brasilane terpene glycosides biosynthesis cluster protein D (245 aa).

2 C3H1-type zinc fingers span residues 121 to 152 (KELK…HDNV) and 161 to 185 (ICHF…HYPA). The interval 186–245 (PHRVTAPMPSKKKSKKLRSSVADDASHPDLGKARRHDPRDDEQNDEVWRNQGRARPGQEW) is disordered. Positions 209–226 (DASHPDLGKARRHDPRDD) are enriched in basic and acidic residues.

In terms of biological role, part of the gene cluster that mediates the biosynthesis of the brasilane terpene glycosides brasilane D and E. The biosynthesis starts with the activity of the terpene cyclase braA that converts farnesyl pyrophosphate into the sesquiterpene alcohol trichobrasilenol. Subsequently, trichobrasilenol is glycosylated by the O-glycosyltransferase braB putatively using UDP-GlcNAc as sugar donor to yield brasilane A. The latter then undergoes two rounds of oxidation performed by the cytochrome P450 monooxygenase braC. In the first round braC hydroxylates C-12 forming brasilane D, which serves as substrate in the second round to establish the epoxide at the bond between C-5 and C-10 and oxidize the alcohol at C-12 to an aldehyde leading to the final product brasilane E. This is Brasilane terpene glycosides biosynthesis cluster protein D from Annulohypoxylon truncatum (Hypoxylon truncatum).